Reading from the N-terminus, the 543-residue chain is CTP synthase (543 aa).

The tract at residues 1-265 (MTRYIFVTGG…DDIVVERFGL (265 aa)) is amidoligase domain. Serine 13 contributes to the CTP binding site. Serine 13 contacts UTP. ATP-binding positions include 14–19 (SLGKGI) and aspartate 71. The Mg(2+) site is built by aspartate 71 and glutamate 139. CTP contacts are provided by residues 146-148 (DIE), 186-191 (KTKPTQ), and lysine 222. UTP is bound by residues 186–191 (KTKPTQ) and lysine 222. Residues 290-541 (TIAMVGKYME…VNAALAQKAR (252 aa)) form the Glutamine amidotransferase type-1 domain. Glycine 351 provides a ligand contact to L-glutamine. Cysteine 378 serves as the catalytic Nucleophile; for glutamine hydrolysis. L-glutamine-binding positions include 379-382 (LGMQ), glutamate 402, and arginine 469. Catalysis depends on residues histidine 514 and glutamate 516.

The protein belongs to the CTP synthase family. Homotetramer.

The enzyme catalyses UTP + L-glutamine + ATP + H2O = CTP + L-glutamate + ADP + phosphate + 2 H(+). It carries out the reaction L-glutamine + H2O = L-glutamate + NH4(+). It catalyses the reaction UTP + NH4(+) + ATP = CTP + ADP + phosphate + 2 H(+). Its pathway is pyrimidine metabolism; CTP biosynthesis via de novo pathway; CTP from UDP: step 2/2. Allosterically activated by GTP, when glutamine is the substrate; GTP has no effect on the reaction when ammonia is the substrate. The allosteric effector GTP functions by stabilizing the protein conformation that binds the tetrahedral intermediate(s) formed during glutamine hydrolysis. Inhibited by the product CTP, via allosteric rather than competitive inhibition. Its function is as follows. Catalyzes the ATP-dependent amination of UTP to CTP with either L-glutamine or ammonia as the source of nitrogen. Regulates intracellular CTP levels through interactions with the four ribonucleotide triphosphates. This chain is CTP synthase, found in Azotobacter vinelandii (strain DJ / ATCC BAA-1303).